Consider the following 1037-residue polypeptide: Nucleoporin NUP120 (1037 aa).

2 leucine-zipper regions span residues 131–152 (LQLP…WFHL) and 290–311 (LLPL…SGIL). Threonine 417 is subject to Phosphothreonine.

In terms of assembly, component of the nuclear pore complex (NPC). NPC constitutes the exclusive means of nucleocytoplasmic transport. NPCs allow the passive diffusion of ions and small molecules and the active, nuclear transport receptor-mediated bidirectional transport of macromolecules such as proteins, RNAs, ribonucleoparticles (RNPs), and ribosomal subunits across the nuclear envelope. Due to its 8-fold rotational symmetry, all subunits are present with 8 copies or multiples thereof. NUP120 is part of the heptameric 0.5 MDa autoassembling NUP84 NPC subcomplex (NUP84, NUP85, NUP120, NUP133, NUP145C, SEC13 and SEH1).

The protein localises to the nucleus. It is found in the nuclear pore complex. Its subcellular location is the nucleus membrane. Its function is as follows. Functions as a component of the nuclear pore complex (NPC). NPC components, collectively referred to as nucleoporins (NUPs), can play the role of both NPC structural components and of docking or interaction partners for transiently associated nuclear transport factors. NUP120 is involved in nuclear poly(A)+ RNA and pre-ribosome export, in GSP1 nuclear import, in NPC assembly and distribution, as well as in nuclear envelope organization. The sequence is that of Nucleoporin NUP120 (NUP120) from Saccharomyces cerevisiae (strain ATCC 204508 / S288c) (Baker's yeast).